A 346-amino-acid chain; its full sequence is D-alanine--D-alanine ligase (346 aa).

The ATP-grasp domain maps to 133 to 327 (KLYAKSVGVK…TLADQIPLEK (195 aa)). 159-211 (LRFPCIIKPARLGSSIGISIVKDEKDLEYAKDVGFEFDNDLVVEEFKNNIKEY) lines the ATP pocket. The Mg(2+) site is built by Asp284, Glu296, and Asn298.

It belongs to the D-alanine--D-alanine ligase family. The cofactor is Mg(2+). Mn(2+) serves as cofactor.

The protein localises to the cytoplasm. The enzyme catalyses 2 D-alanine + ATP = D-alanyl-D-alanine + ADP + phosphate + H(+). It functions in the pathway cell wall biogenesis; peptidoglycan biosynthesis. Its function is as follows. Cell wall formation. The protein is D-alanine--D-alanine ligase of Campylobacter jejuni subsp. doylei (strain ATCC BAA-1458 / RM4099 / 269.97).